Here is a 163-residue protein sequence, read N- to C-terminus: Phosphopantetheine adenylyltransferase (163 aa).

A substrate-binding site is contributed by serine 11. ATP contacts are provided by residues 11–12 and histidine 19; that span reads SF. The substrate site is built by lysine 43, leucine 75, and arginine 89. ATP is bound by residues 90-92, glutamate 100, and 125-131; these read GLR and YSFLSSS.

It belongs to the bacterial CoaD family. In terms of assembly, homohexamer. Mg(2+) serves as cofactor.

The protein resides in the cytoplasm. It carries out the reaction (R)-4'-phosphopantetheine + ATP + H(+) = 3'-dephospho-CoA + diphosphate. The protein operates within cofactor biosynthesis; coenzyme A biosynthesis; CoA from (R)-pantothenate: step 4/5. In terms of biological role, reversibly transfers an adenylyl group from ATP to 4'-phosphopantetheine, yielding dephospho-CoA (dPCoA) and pyrophosphate. This is Phosphopantetheine adenylyltransferase from Lysinibacillus sphaericus (strain C3-41).